Here is a 99-residue protein sequence, read N- to C-terminus: Large ribosomal subunit protein eL21 (99 aa).

A compositionally biased stretch (polar residues) spans 1–14; sequence MPNSNGPLSNSGGK. Residues 1–38 form a disordered region; sequence MPNSNGPLSNSGGKLQNDPRDRGTSPPQRAIADYDDGE.

It belongs to the eukaryotic ribosomal protein eL21 family.

The sequence is that of Large ribosomal subunit protein eL21 from Halobacterium salinarum (strain ATCC 29341 / DSM 671 / R1).